Reading from the N-terminus, the 58-residue chain is uncharacterized protein (58 aa).

It belongs to the ycf18/nblA family.

The protein resides in the plastid. The protein localises to the chloroplast. This is an uncharacterized protein from Porphyra purpurea (Red seaweed).